We begin with the raw amino-acid sequence, 151 residues long: Large ribosomal subunit protein bL9 (151 aa).

It belongs to the bacterial ribosomal protein bL9 family.

Binds to the 23S rRNA. In Acidobacterium capsulatum (strain ATCC 51196 / DSM 11244 / BCRC 80197 / JCM 7670 / NBRC 15755 / NCIMB 13165 / 161), this protein is Large ribosomal subunit protein bL9.